Reading from the N-terminus, the 470-residue chain is Methylenetetrahydrofolate--tRNA-(uracil-5-)-methyltransferase TrmFO (470 aa).

Residue 10-15 (GAGLAG) coordinates FAD.

The protein belongs to the MnmG family. TrmFO subfamily. FAD serves as cofactor.

It is found in the cytoplasm. The enzyme catalyses uridine(54) in tRNA + (6R)-5,10-methylene-5,6,7,8-tetrahydrofolate + NADH + H(+) = 5-methyluridine(54) in tRNA + (6S)-5,6,7,8-tetrahydrofolate + NAD(+). It carries out the reaction uridine(54) in tRNA + (6R)-5,10-methylene-5,6,7,8-tetrahydrofolate + NADPH + H(+) = 5-methyluridine(54) in tRNA + (6S)-5,6,7,8-tetrahydrofolate + NADP(+). Functionally, catalyzes the folate-dependent formation of 5-methyl-uridine at position 54 (M-5-U54) in all tRNAs. The polypeptide is Methylenetetrahydrofolate--tRNA-(uracil-5-)-methyltransferase TrmFO (Prochlorococcus marinus subsp. pastoris (strain CCMP1986 / NIES-2087 / MED4)).